We begin with the raw amino-acid sequence, 600 residues long: ATP-dependent lipid A-core flippase (600 aa).

The next 5 helical transmembrane spans lie at Ile-28 to Ile-48, Ile-80 to Phe-100, Trp-182 to Val-202, Ile-267 to Ala-287, and Asp-295 to Ile-315. In terms of domain architecture, ABC transmembrane type-1 spans Ile-28 to Arg-327. In terms of domain architecture, ABC transporter spans Leu-359–Met-596. Gly-393 to Ser-400 provides a ligand contact to ATP.

This sequence belongs to the ABC transporter superfamily. Lipid exporter (TC 3.A.1.106) family. In terms of assembly, homodimer.

It localises to the cell inner membrane. The enzyme catalyses ATP + H2O + lipid A-core oligosaccharideSide 1 = ADP + phosphate + lipid A-core oligosaccharideSide 2.. Involved in lipopolysaccharide (LPS) biosynthesis. Translocates lipid A-core from the inner to the outer leaflet of the inner membrane. Transmembrane domains (TMD) form a pore in the inner membrane and the ATP-binding domain (NBD) is responsible for energy generation. This is ATP-dependent lipid A-core flippase from Shewanella frigidimarina (strain NCIMB 400).